The chain runs to 165 residues: UPF0114 protein Ent638_3411 (165 aa).

Transmembrane regions (helical) follow at residues 15-35 (LLAP…IKFF), 53-73 (LILV…LVMV), and 136-156 (LMWY…MGYL).

The protein belongs to the UPF0114 family.

It is found in the cell membrane. The protein is UPF0114 protein Ent638_3411 of Enterobacter sp. (strain 638).